Here is a 270-residue protein sequence, read N- to C-terminus: Putative hydro-lyase Reut_A2449 (270 aa).

The protein belongs to the D-glutamate cyclase family.

This is Putative hydro-lyase Reut_A2449 from Cupriavidus pinatubonensis (strain JMP 134 / LMG 1197) (Cupriavidus necator (strain JMP 134)).